The primary structure comprises 87 residues: Keratin-associated protein 7-1 (87 aa).

The 11 X 2 AA repeats of G-[YCGS] stretch occupies residues 43-84 (GCGCNGYSSLGYSFGGSNINNLGGCYGGSFYRPWGSGSGFGY).

It belongs to the KRTAP type 7 family. As to quaternary structure, interacts with hair keratins. In terms of tissue distribution, expressed in the upper portion of the hair cortex.

In terms of biological role, in the hair cortex, hair keratin intermediate filaments are embedded in an interfilamentous matrix, consisting of hair keratin-associated proteins (KRTAP), which are essential for the formation of a rigid and resistant hair shaft through their extensive disulfide bond cross-linking with abundant cysteine residues of hair keratins. The matrix proteins include the high-sulfur and high-glycine-tyrosine keratins. In Homo sapiens (Human), this protein is Keratin-associated protein 7-1 (KRTAP7-1).